The primary structure comprises 284 residues: Stomatin (284 aa).

Over M1–G31 the chain is Cytoplasmic. Residue S18 is modified to Phosphoserine. C30 is lipidated: S-palmitoyl cysteine. An intramembrane segment occupies W32 to I52. At C53–H284 the chain is on the cytoplasmic side. C87 carries S-palmitoyl cysteine lipidation. Phosphoserine is present on residues S161 and S244. The segment at S265–V273 is required for homooligomerization. Residues I267–F269 are required for lipid raft association. The interval V273–H284 is interaction with LANCL1.

Belongs to the band 7/mec-2 family. In terms of assembly, interacts with LANCL1. Interacts with SLC2A1. Interacts with SLC4A1; this interaction positively regulates SLC4A1 activity. Identified in large complexes with SLC40A1, SLC14A1, SLC29A1 and AQP1. Homodimer and higher order homooligomers. The homodimer is banana-shaped. Interacts with ASIC1, ASIC2 and ASIC3. Interacts with STOML1; may redistribute STOM from the plasma membrane to late endosomes. In terms of tissue distribution, expressed in all sensory neurons of the dorsal root ganglia. In the CNS, expressed in many neurons of the spinal cord, medulla and pons. Expressed only in scattered neurons in the cortex, hippocampus, thalamus and basal ganglia. In the cerebellum, expressed in all Purkinje cells (at protein level). Widely expressed with high levels in heart, liver, skeletal muscle and testis and low levels in lung, brain and spleen.

Its subcellular location is the cell membrane. It localises to the cytoplasm. It is found in the cytoskeleton. The protein resides in the membrane raft. The protein localises to the melanosome. Its subcellular location is the cytoplasmic vesicle. In terms of biological role, regulates ion channel activity and transmembrane ion transport. Regulates ASIC2 and ASIC3 channel activity. The chain is Stomatin from Mus musculus (Mouse).